Consider the following 361-residue polypeptide: Spermidine/putrescine import ATP-binding protein PotA (361 aa).

In terms of domain architecture, ABC transporter spans 4 to 234; that stretch reads LEIKNVVKRF…PKNRFVADFL (231 aa). 36–43 is an ATP binding site; the sequence is GPSGCGKT.

The protein belongs to the ABC transporter superfamily. Spermidine/putrescine importer (TC 3.A.1.11.1) family. The complex is composed of two ATP-binding proteins (PotA), two transmembrane proteins (PotB and PotC) and a solute-binding protein (PotD).

The protein localises to the cell inner membrane. It carries out the reaction ATP + H2O + polyamine-[polyamine-binding protein]Side 1 = ADP + phosphate + polyamineSide 2 + [polyamine-binding protein]Side 1.. Functionally, part of the ABC transporter complex PotABCD involved in spermidine/putrescine import. Responsible for energy coupling to the transport system. In Chromobacterium violaceum (strain ATCC 12472 / DSM 30191 / JCM 1249 / CCUG 213 / NBRC 12614 / NCIMB 9131 / NCTC 9757 / MK), this protein is Spermidine/putrescine import ATP-binding protein PotA.